We begin with the raw amino-acid sequence, 461 residues long: Kynurenine 3-monooxygenase (461 aa).

FAD-binding positions include 17–18, 37–39, and Ala-56; these read LA and ERR. L-kynurenine is bound by residues Arg-84 and Tyr-98. Residues Arg-111, Leu-135, Asp-311, and 324–325 contribute to the FAD site; that span reads MN. L-kynurenine is bound by residues Asn-369 and Tyr-404.

The protein belongs to the aromatic-ring hydroxylase family. KMO subfamily. FAD is required as a cofactor.

It carries out the reaction L-kynurenine + NADPH + O2 + H(+) = 3-hydroxy-L-kynurenine + NADP(+) + H2O. Its pathway is cofactor biosynthesis; NAD(+) biosynthesis; quinolinate from L-kynurenine: step 1/3. It functions in the pathway siderophore biosynthesis; quinolobactin biosynthesis. Catalyzes the hydroxylation of L-kynurenine (L-Kyn) to form 3-hydroxy-L-kynurenine (L-3OHKyn). Probably required for the synthesis of quinolinic acid and the siderophore quinolobactin. The protein is Kynurenine 3-monooxygenase of Pseudomonas fluorescens.